The primary structure comprises 155 residues: MIFGHIAQPNPCRLPAAIEKALDFLRATDFNALEPGVVEIDGKNIYTQIIDLTTREAVVNRPEVHRRYIDIQFLAWGEEKIGIAIDTGNNKVSESLLEQRNIIFYHDSEHESFIEMIPGSYAIFFPQDVHRPGCIMQTASEIRKIVVKVALTALN.

Belongs to the TabA/YiaL family.

The chain is Protein YiaL (yiaL) from Escherichia coli (strain K12).